We begin with the raw amino-acid sequence, 895 residues long: DNA mismatch repair protein MutS (895 aa).

An ATP-binding site is contributed by 632 to 639; that stretch reads GPNMAGKS. The disordered stretch occupies residues 824–849; sequence VTQDKKQVKKQTKNNHSARSGSRQQQ. The span at 837–849 shows a compositional bias: polar residues; that stretch reads NNHSARSGSRQQQ.

The protein belongs to the DNA mismatch repair MutS family.

Functionally, this protein is involved in the repair of mismatches in DNA. It is possible that it carries out the mismatch recognition step. This protein has a weak ATPase activity. In Desulforapulum autotrophicum (strain ATCC 43914 / DSM 3382 / VKM B-1955 / HRM2) (Desulfobacterium autotrophicum), this protein is DNA mismatch repair protein MutS.